We begin with the raw amino-acid sequence, 154 residues long: Large ribosomal subunit protein uL23 (154 aa).

The segment at 1–39 (MAPAKADPSKKSDPKAQAAKVAKAVKSGSTLKKKSQKIR) is disordered. Low complexity predominate over residues 15-26 (KAQAAKVAKAVK).

It belongs to the universal ribosomal protein uL23 family.

Its function is as follows. This protein binds to a specific region on the 26S rRNA. The protein is Large ribosomal subunit protein uL23 (RPL23A) of Nicotiana tabacum (Common tobacco).